The following is a 399-amino-acid chain: Probable aspartate/prephenate aminotransferase (399 aa).

3 residues coordinate L-aspartate: Gly39, Trp125, and Asn175. Lys239 is modified (N6-(pyridoxal phosphate)lysine). Arg375 serves as a coordination point for L-aspartate.

This sequence belongs to the class-I pyridoxal-phosphate-dependent aminotransferase family. In terms of assembly, homodimer. The cofactor is pyridoxal 5'-phosphate.

It is found in the cytoplasm. It carries out the reaction L-aspartate + 2-oxoglutarate = oxaloacetate + L-glutamate. It catalyses the reaction L-arogenate + 2-oxoglutarate = prephenate + L-glutamate. In terms of biological role, catalyzes the reversible conversion of aspartate and 2-oxoglutarate to glutamate and oxaloacetate. Can also transaminate prephenate in the presence of glutamate. The sequence is that of Probable aspartate/prephenate aminotransferase (aatA) from Rickettsia bellii (strain RML369-C).